Consider the following 379-residue polypeptide: Na(+)/H(+) antiporter NhaA (379 aa).

12 helical membrane-spanning segments follow: residues 14–34 (AGGI…NTPL), 59–79 (LLMW…GMEV), 95–115 (VFPA…FLVF), 125–145 (GWAI…ALLG), 154–174 (IFLL…IALF), 175–195 (FSHD…AILI), 200–220 (LKIT…ASVL), 221–241 (KSGV…PLNG), 261–281 (FAIL…GMGM), 292–312 (IALG…FVAV), 328–348 (IFAV…LAGL), and 359–379 (VTAL…VLGY).

Belongs to the NhaA Na(+)/H(+) (TC 2.A.33) antiporter family.

Its subcellular location is the cell inner membrane. The enzyme catalyses Na(+)(in) + 2 H(+)(out) = Na(+)(out) + 2 H(+)(in). Na(+)/H(+) antiporter that extrudes sodium in exchange for external protons. The chain is Na(+)/H(+) antiporter NhaA from Pasteurella multocida (strain Pm70).